The primary structure comprises 200 residues: MDDKKKKRSPKPCLAQPAQAPGTLRRVPVPTSHSGSLALGLPHLPSPKQRAKFKRVGKEKCRPVLAGGGSGSAGTPLQHSFLTEVTDVYEMEGGLLNLLNDFHSGRLQAFGKECSFEQLEHVREMQEKLARLHFSLDVCGEEEDDEEEEDGVTEGLPEEQKKTMADRNLDQLLSNLEDLSNSIQKLHLAENAEPEEQSAA.

Methionine 1 bears the N-acetylmethionine mark. The segment covering 1 to 10 has biased composition (basic residues); that stretch reads MDDKKKKRSP. The tract at residues 1 to 49 is disordered; the sequence is MDDKKKKRSPKPCLAQPAQAPGTLRRVPVPTSHSGSLALGLPHLPSPKQ. Serine 46 and serine 115 each carry phosphoserine. Residues 141 to 152 are compositionally biased toward acidic residues; that stretch reads EEEDDEEEEDGV. A disordered region spans residues 141-164; it reads EEEDDEEEEDGVTEGLPEEQKKTM. Residues 158-183 are a coiled coil; the sequence is EEQKKTMADRNLDQLLSNLEDLSNSI.

Interacts with BBS1, BBS2, BBS4, BBS5, BBS6, BBS7 and TTC8/BBS8. Interacts with MAPKAP1/SIN1 isoform 1 and RICTOR.

Its subcellular location is the cytoplasm. The protein resides in the cytoskeleton. It localises to the microtubule organizing center. It is found in the centrosome. Functionally, involved in ciliogenesis. Regulates cilia length through its interaction with MAPKAP1/SIN1 but independently of mTORC2 complex. Modulates mTORC2 complex assembly and function, possibly enhances AKT1 phosphorylation. Does not seem to modulate assembly and function of mTORC1 complex. The protein is Coiled-coil domain-containing protein 28B (CCDC28B) of Homo sapiens (Human).